A 335-amino-acid polypeptide reads, in one-letter code: UPF0353 protein MAP_3435c (335 aa).

The next 2 membrane-spanning stretches (helical) occupy residues 18 to 38 (WFFL…VQQF) and 67 to 87 (VPTI…AGPT). Residues 98–294 (VVMLVIDVSE…DSLKNVYSTL (197 aa)) form the VWFA domain. A helical transmembrane segment spans residues 309 to 329 (MAWMLLGAVVLAGAVLAGLLL).

This sequence belongs to the UPF0353 family.

It is found in the cell membrane. This is UPF0353 protein MAP_3435c from Mycolicibacterium paratuberculosis (strain ATCC BAA-968 / K-10) (Mycobacterium paratuberculosis).